A 261-amino-acid polypeptide reads, in one-letter code: MAAPLIQLNNIHLRFSAEPVLEGINLTIHQSEIVTIIGPNGAGKSSLVKVITGLIAPTTGSITHCAQGKQPLRIGYMPQTLHLDPSMPIKVSRFLSLAGPKAPSRSARKAALEQVGIANLSSAQMHNLSGGEFQRVLLARAILQRPNLLVLDEPLQGVDVNGQIELYRLIAELRQQLQCAIVMVSHDLHLVMAQTDSVVCLNRHMCCHGQPESVSKHPEYLKLFGKQASDDLAVYTHNHDHHHDMHGDVVGCSDECDHHHD.

In terms of domain architecture, ABC transporter spans 6-227; it reads IQLNNIHLRF…PEYLKLFGKQ (222 aa). 38–45 lines the ATP pocket; that stretch reads GPNGAGKS.

It belongs to the ABC transporter superfamily. Zinc importer (TC 3.A.1.15.5) family. In terms of assembly, the complex is composed of two ATP-binding proteins (ZnuC), two transmembrane proteins (ZnuB) and a solute-binding protein (ZnuA).

The protein localises to the cell inner membrane. The enzyme catalyses Zn(2+)(out) + ATP(in) + H2O(in) = Zn(2+)(in) + ADP(in) + phosphate(in) + H(+)(in). Functionally, part of the ABC transporter complex ZnuABC involved in zinc import. Responsible for energy coupling to the transport system. The polypeptide is Zinc import ATP-binding protein ZnuC (Saccharophagus degradans (strain 2-40 / ATCC 43961 / DSM 17024)).